The chain runs to 143 residues: High mobility group protein B (143 aa).

The interval 1–22 (MSKAASQYATLEDLPSKPKRPQ) is disordered. Residues 18–86 (PKRPQTGFFI…TYDKQNDQWK (69 aa)) constitute a DNA-binding region (HMG box). At alanine 70 the chain carries Blocked amino end (Ala). Composition is skewed to basic and acidic residues over residues 100–120 (AKKA…ELEK) and 131–143 (AKKD…AKKK). The interval 100–143 (AKKALKEKTKKSKAAEKELEKSKKKAPAAAPAKKDDKKAPAKKK) is disordered.

It is found in the nucleus. It localises to the chromosome. The sequence is that of High mobility group protein B from Tetrahymena thermophila.